The following is an 852-amino-acid chain: MEALGPGGDRASPASSTSSLDLWHLSMRADSAYSSFSAASGGPEPRTQSPGTDLLPYLDWDYVRVVWGGPGPAPPDAALCTSPRPRPAVAARSGPQPTEVPGTPGPLNRQATPLLYALAAEAEAAAQAAEPPSPPASRAAYRQRLQGAQRRVLRETSFQRKELRMSLPARLRPTVPARPPATHPRSASLSHPGGEGEPARSRAPAPGTAGRGPLANQQRKWCFSEPGKLDRVGRGGGPARECLGEACSSSGLPGPEPLEFQHPALAKFEDHEVGWLPETQPQGSMNLDSGSLKLGDAFRPASRSRSASGEVLGSWGGSGGTIPIVQAVPQGAETPRPLFQTKLSRFLPQKEAAVMYPAELPQSSPADSEQRVSETCIVPAWLPSLPDEVFLEEAPLVRMRSPPDPHASQGPPASVHASDQPYGTGLGQRTGQVTVPTEYPLHECPGTAGADDCWQGVNGSVGISRPTSHTPTGTANDNIPTIDPTGLTTNPPTAAESDLLKPVPADALGLSGNDTPGPSHNTALARGTGQPGSRPTWPSQCLEELVQELARLDPSLCDPLASQPSPEPPLGLLDGLIPLAEVRAAMRPACGEAGEEAASTFEPGSYQFSFTQLLPAPREETRLENPATHPVLDQPCGQGLPAPNNSIQGKKVELAARLQKMLQDLHTEQERLQGEAQAWARRQAALEAAVRQACAPQELERFSRFMADLERVLGLLLLLGSRLARVRRALARAASDSDPDEQASLLQRLRLLQRQEEDAKELKEHVARRERAVREVLVRALPVEELRVYCALLAGKAAVLAQQRNLDERIRLLQDQLDAIRDDLGHHAPSPSPARPPGTCPPVQPPFPLLLT.

An N-acetylmethionine modification is found at methionine 1. Residue serine 18 is modified to Phosphoserine. Disordered stretches follow at residues 34–54, 81–109, and 125–218; these read SSFS…GTDL, TSPR…PLNR, and AAQA…ANQQ. Threonine 103 is subject to Phosphothreonine. The segment covering 125–144 has biased composition (low complexity); it reads AAQAAEPPSPPASRAAYRQR. Phosphoserine occurs at positions 133 and 137. The 89-residue stretch at 145–233 folds into the ASD1 domain; sequence LQGAQRRVLR…SEPGKLDRVG (89 aa). Residues 152–164 show a composition bias toward basic and acidic residues; the sequence is VLRETSFQRKELR. 3 positions are modified to phosphoserine: serine 166, serine 190, and serine 224. 4 disordered regions span residues 276–320, 399–431, 464–496, and 823–852; these read LPET…GSGG, MRSP…QRTG, SRPT…TAAE, and DLGH…LLLT. Residues 279–289 show a composition bias toward polar residues; it reads TQPQGSMNLDS. The segment covering 301-313 has biased composition (low complexity); it reads ASRSRSASGEVLG. The segment covering 465–479 has biased composition (polar residues); that stretch reads RPTSHTPTGTANDNI. The region spanning 543–825 is the ASD2 domain; sequence EELVQELARL…QLDAIRDDLG (283 aa). Positions 830-852 are enriched in pro residues; the sequence is SPSPARPPGTCPPVQPPFPLLLT.

The protein belongs to the shroom family. In terms of assembly, interacts with F-actin.

The protein resides in the cytoplasm. It localises to the cytoskeleton. In terms of biological role, may be involved in the assembly of microtubule arrays during cell elongation. The polypeptide is Protein Shroom1 (SHROOM1) (Homo sapiens (Human)).